Here is a 253-residue protein sequence, read N- to C-terminus: Imidazole glycerol phosphate synthase subunit HisF (253 aa).

Residues Asp11 and Asp130 contribute to the active site.

Belongs to the HisA/HisF family. As to quaternary structure, heterodimer of HisH and HisF.

The protein localises to the cytoplasm. It carries out the reaction 5-[(5-phospho-1-deoxy-D-ribulos-1-ylimino)methylamino]-1-(5-phospho-beta-D-ribosyl)imidazole-4-carboxamide + L-glutamine = D-erythro-1-(imidazol-4-yl)glycerol 3-phosphate + 5-amino-1-(5-phospho-beta-D-ribosyl)imidazole-4-carboxamide + L-glutamate + H(+). It participates in amino-acid biosynthesis; L-histidine biosynthesis; L-histidine from 5-phospho-alpha-D-ribose 1-diphosphate: step 5/9. Its function is as follows. IGPS catalyzes the conversion of PRFAR and glutamine to IGP, AICAR and glutamate. The HisF subunit catalyzes the cyclization activity that produces IGP and AICAR from PRFAR using the ammonia provided by the HisH subunit. In Desulfitobacterium hafniense (strain DSM 10664 / DCB-2), this protein is Imidazole glycerol phosphate synthase subunit HisF.